A 25-amino-acid chain; its full sequence is Neuromedin-U-25 (25 aa).

N25 carries the asparagine amide modification.

It belongs to the NmU family.

The protein resides in the secreted. Its function is as follows. Stimulates uterine smooth muscle contraction and causes selective vasoconstriction. This is Neuromedin-U-25 (NMU) from Gallus gallus (Chicken).